The chain runs to 303 residues: Aspartate carbamoyltransferase catalytic subunit (303 aa).

Carbamoyl phosphate-binding residues include arginine 49 and threonine 50. Lysine 77 lines the L-aspartate pocket. Carbamoyl phosphate-binding residues include arginine 99, histidine 126, and glutamine 129. L-aspartate is bound by residues arginine 159 and arginine 211. 2 residues coordinate carbamoyl phosphate: serine 252 and proline 253.

The protein belongs to the aspartate/ornithine carbamoyltransferase superfamily. ATCase family. In terms of assembly, heterododecamer (2C3:3R2) of six catalytic PyrB chains organized as two trimers (C3), and six regulatory PyrI chains organized as three dimers (R2).

The catalysed reaction is carbamoyl phosphate + L-aspartate = N-carbamoyl-L-aspartate + phosphate + H(+). The protein operates within pyrimidine metabolism; UMP biosynthesis via de novo pathway; (S)-dihydroorotate from bicarbonate: step 2/3. Its function is as follows. Catalyzes the condensation of carbamoyl phosphate and aspartate to form carbamoyl aspartate and inorganic phosphate, the committed step in the de novo pyrimidine nucleotide biosynthesis pathway. This Listeria monocytogenes serotype 4b (strain F2365) protein is Aspartate carbamoyltransferase catalytic subunit.